We begin with the raw amino-acid sequence, 535 residues long: Cytochrome P450 monooxygenase claQ (535 aa).

The next 2 membrane-spanning stretches (helical) occupy residues 7-27 (IGTW…KLVG) and 225-245 (YFAI…NLPT). Cysteine 472 provides a ligand contact to heme.

The protein belongs to the cytochrome P450 family. Heme serves as cofactor.

The protein resides in the membrane. Its pathway is secondary metabolite biosynthesis; terpenoid biosynthesis. Functionally, cytochrome P450 monooxygenase; part of the gene cluster that mediates the biosynthesis of clavilactone A, a meroterpenoid that features a unique benzo-fused ten-membered carbocyclic ring unit with an alpha,beta-epoxy-gamma-lactone moiety, forming an intriguing 10/5/3 tricyclic nested skeleton. Cytochrome P450 monooxygenases claO, claP, claQ, claU, and claW are close orthologs, suggesting that a redundant function or pseudogenes are present in the cla cluster. These monoxygenases are not involved in clavilactone A biosynthesis nor its modification. ClaR, ClaS and ClaT are sufficient to produce clavilactone A. The biosynthesis begins with the prenyltransferase claS that transfers geranyl pyrophosphate (GPP) to hydroquinone to produces geranylhydroquinone. The cytochrome P450 monooxygenase claR then catalyzes the diradical coupling reaction between the intramolecular hydroquinone and allyl moieties to form the benzo-fused ten-membered carbocyclic ring unit of wigantol. Finally the cytochrome P450 monooxygenase claT exquisitely and stereoselectively assembles the alpha,beta-epoxy-gamma-lactone moiety, producing clavilactone A via arnebinol A. This chain is Cytochrome P450 monooxygenase claQ, found in Ampulloclitocybe clavipes (Club foot).